The chain runs to 71 residues: UPF0337 protein RPA4418 (71 aa).

The interval 1 to 54 is disordered; sequence MGSTMDKIKGQANELAGKAKQGIGEATGSDKLKGEGAIQEAKGHGQQALGNAKD.

It belongs to the UPF0337 (CsbD) family.

This Rhodopseudomonas palustris (strain ATCC BAA-98 / CGA009) protein is UPF0337 protein RPA4418.